A 256-amino-acid polypeptide reads, in one-letter code: Fumarate reductase iron-sulfur subunit (256 aa).

One can recognise a 2Fe-2S ferredoxin-type domain in the interval 7 to 97 (MNVEVLRYNP…HMRIEPLANF (91 aa)). Tyr-14 contributes to the a menaquinone binding site. Residues Cys-58, Cys-63, Cys-66, and Cys-78 each contribute to the [2Fe-2S] cluster site. One can recognise a 4Fe-4S ferredoxin-type domain in the interval 151 to 180 (LEKYRQFSMCINCGLCYAACPQFGLNPEFL). Residues Cys-160, Cys-163, and Cys-166 each contribute to the [4Fe-4S] cluster site. [3Fe-4S] cluster is bound by residues Cys-170, Cys-216, and Cys-222. A [4Fe-4S] cluster-binding site is contributed by Cys-226. 237–240 (NQGK) contributes to the a menaquinone binding site.

This sequence belongs to the succinate dehydrogenase/fumarate reductase iron-sulfur protein family. As to quaternary structure, fumarate dehydrogenase forms part of an enzyme complex containing four subunits: a flavoprotein, an iron-sulfur, and two hydrophobic anchor proteins. The cofactor is [2Fe-2S] cluster. Requires [3Fe-4S] cluster as cofactor. [4Fe-4S] cluster serves as cofactor.

It is found in the cell inner membrane. It carries out the reaction a quinone + succinate = fumarate + a quinol. The enzyme catalyses a menaquinone + succinate = a menaquinol + fumarate. This Haemophilus influenzae (strain ATCC 51907 / DSM 11121 / KW20 / Rd) protein is Fumarate reductase iron-sulfur subunit (frdB).